A 1390-amino-acid chain; its full sequence is MVKEQFRETDVAKKISHICFGMKSAEEMRQQAHIQVVSKNLYSQDNNHSPLLYGVLDHRMGTSEKDRPCETCGKNLADCLGHYGYIDLELPCFHVGYFRAVIGILQMICKTCCHIMLSQEEKKQFLDYLKRPGLTYLQKRGLKKKISDKCRKKNTCHHCGAFNGTVKKCGLLKIIHEKYKTNKKVVDPIVSSFLQSFETAIEHNKEVEPLLGKAQENLNPLVVLNLFKRIPAEDIPLLLMNPEAGKPSDLILTRLLVPPLCIRPSVVSDLKSGTNEDDLTMKLTEIIFLNDVIKKHRISGAKTQMIMEDWDFLQLQCALYINSELSGIPLNMAPKKWTRGFVQRLKGKQGRFRGNLSGKRVDFSGRTVISPDPNLRIDEVAVPVHVAKILTFPEKVNKANINFLRKLVRNGPEVHPGANFIQQRHTQMKRFLKYGNREKMAQELKFGDIVERHLIDGDVVLFNRQPSLHKLSIMAHLARVKPHRTFRFNECVCTPYNADFDGDEMNLHLPQTEEAKAEALVLMGTKANLVTPRNGEPLIAAIQDFLTGAYLLTLKDTFFDRAKACQIIASILVGKDEKIKVRLPPPTILKPVTLWTGKQIFSVILRPSDDNPVRANLRTKGKQYCGRGEDLCVNDSYVTIQNSELMSGSMDKGTLGSGSKNNIFYILLRDWGQNEAADAMSRLARLAPVYLSNRGFSIGIGDVTPGQGLLKAKYELLNAGYKKCDEYIEALNTGKLQQQPGCTAEETLEALILKELSVIRDHAGSACLRELDKSNSPLTMALCGSKGSFINISQMIACVGQQAISGSRVPDGFENRSLPHFEKHSKLPAAKGFVANSFYSGLTPTEFFFHTMAGREGLVDTAVKTAETGYMQRRLVKSLEDLCSQYDLTVRSSTGDIIQFIYGGDGLDPAAMEGKDEPLEFKRVLDNIKAVFPCRSEPALSKNELLLSAESIMKKNEFLCCQDSFLQEIKKFIKEVSEKIKKTRDKYGINDNGTTEPRVLYQLDRITPTQIEKFLETCRDKYMRAQMEPGSAVGALCAQSIGEPGTQMTLKTFHFAGVASMNITLGVPRIKEIINASKAISTPIITAQLDKDDDADYARLVKGRIEKTLLGEISEYIEEVFLPDDCFILVKLSLERIRLLRLEVNAETVRYSICMSKLRVKPGDVAVHGEAVVCVTPRENSKSSMYYVLQFLKEDLPKVVVQGIPEVSRAVIHIDEQSGKEKYKLLVEGDNLRAVMATHGVKGTRTTSNNTYEVEKTLGIEAARTTIINEIQYTMVNHGMSIDRRHVMLLSDLMTYKGEVLGITRFGLAKMKESVLMLASFEKTADHLFDAAYFGQKDSVCGVSECIIMGIPMNIGTGLFKLLHKANRDPSPPRRPLIFDTNEFHIPLVT.

Zn(2+) is bound by residues Cys-69, Cys-72, Cys-79, His-82, Cys-109, and Cys-112. DNA is bound at residue Lys-144. 2 residues coordinate Zn(2+): Cys-156 and Cys-159. 6 residues coordinate DNA: Lys-167, Ser-326, Lys-348, Arg-353, Arg-360, and Arg-366. Lys-445 bears the N6-acetyllysine mark. RNA is bound at residue Arg-464. Residues Asp-499, Asp-501, and Asp-503 each coordinate Mg(2+). Asp-503 contributes to the RNA binding site. Residues 844 to 856 (PTEFFFHTMAGRE) form a bridging helix region. 3 residues coordinate DNA: Arg-1159, Arg-1305, and Lys-1323.

This sequence belongs to the RNA polymerase beta' chain family. As to quaternary structure, component of the RNA polymerase III (Pol III) complex consisting of 17 subunits: a ten-subunit catalytic core composed of POLR3A/RPC1, POLR3B/RPC2, POLR1C/RPAC1, POLR1D/RPAC2, POLR3K/RPC10, POLR2E/RPABC1, POLR2F/RPABC2, POLR2H/RPABC3, POLR2K/RPABC4 and POLR2L/RPABC5; a mobile stalk composed of two subunits POLR3H/RPC8 and CRCP/RPC9, protruding from the core and functioning primarily in transcription initiation; and additional subunits homologous to general transcription factors of the RNA polymerase II machinery, POLR3C/RPC3-POLR3F/RPC6-POLR3G/RPC7 heterotrimer required for transcription initiation and POLR3D/RPC4-POLR3E/RPC5 heterodimer involved in both transcription initiation and termination. As part of the RNA polymerase III complex, interacts with PKP2. Mg(2+) serves as cofactor.

The protein localises to the nucleus. Its subcellular location is the cytoplasm. It localises to the cytosol. The enzyme catalyses RNA(n) + a ribonucleoside 5'-triphosphate = RNA(n+1) + diphosphate. Catalytic core component of RNA polymerase III (Pol III), a DNA-dependent RNA polymerase which synthesizes small non-coding RNAs using the four ribonucleoside triphosphates as substrates. Synthesizes 5S rRNA, snRNAs, tRNAs and miRNAs from at least 500 distinct genomic loci. Pol III-mediated transcription cycle proceeds through transcription initiation, transcription elongation and transcription termination stages. During transcription initiation, Pol III is recruited to DNA promoters type I, II or III with the help of general transcription factors and other specific initiation factors. Once the polymerase has escaped from the promoter it enters the elongation phase during which RNA is actively polymerized, based on complementarity with the template DNA strand. Transcription termination involves the release of the RNA transcript and polymerase from the DNA. Forms Pol III active center together with the second largest subunit POLR3B/RPC2. Appends one nucleotide at a time to the 3' end of the nascent RNA, with POLR3A/RPC1 contributing a Mg(2+)-coordinating DxDGD motif, and POLR3B/RPC2 participating in the coordination of a second Mg(2+) ion and providing lysine residues believed to facilitate Watson-Crick base pairing between the incoming nucleotide and template base. Typically, Mg(2+) ions direct a 5' nucleoside triphosphate to form a phosphodiester bond with the 3' hydroxyl of the preceding nucleotide of the nascent RNA, with the elimination of pyrophosphate. Pol III plays a key role in sensing and limiting infection by intracellular bacteria and DNA viruses. Acts as a nuclear and cytosolic DNA sensor involved in innate immune response. Can sense non-self dsDNA that serves as template for transcription into dsRNA. The non-self RNA polymerase III transcripts, such as Epstein-Barr virus-encoded RNAs (EBERs) induce type I interferon and NF-kappa-B through the RIG-I pathway. The chain is DNA-directed RNA polymerase III subunit RPC1 from Bos taurus (Bovine).